Here is a 313-residue protein sequence, read N- to C-terminus: Cytochrome f (313 aa).

The signal sequence occupies residues 1-31 (MQNMFSFLSNKKIIALFLIIGTIFMPLSSEA). Heme contacts are provided by tyrosine 32, cysteine 52, cysteine 55, and histidine 56. Residues 279–298 (IKWLIAFLILSTLGQVFLVL) traverse the membrane as a helical segment.

The protein belongs to the cytochrome f family. As to quaternary structure, the 4 large subunits of the cytochrome b6-f complex are cytochrome b6, subunit IV (17 kDa polypeptide, petD), cytochrome f and the Rieske protein, while the 4 small subunits are PetG, PetL, PetM and PetN. The complex functions as a dimer. It depends on heme as a cofactor.

The protein localises to the plastid. The protein resides in the chloroplast thylakoid membrane. Its function is as follows. Component of the cytochrome b6-f complex, which mediates electron transfer between photosystem II (PSII) and photosystem I (PSI), cyclic electron flow around PSI, and state transitions. This is Cytochrome f (petA) from Mesostigma viride (Green alga).